A 1368-amino-acid polypeptide reads, in one-letter code: DNA-directed RNA polymerase subunit beta (1368 aa).

The protein belongs to the RNA polymerase beta chain family. As to quaternary structure, the RNAP catalytic core consists of 2 alpha, 1 beta, 1 beta' and 1 omega subunit. When a sigma factor is associated with the core the holoenzyme is formed, which can initiate transcription.

The catalysed reaction is RNA(n) + a ribonucleoside 5'-triphosphate = RNA(n+1) + diphosphate. Its function is as follows. DNA-dependent RNA polymerase catalyzes the transcription of DNA into RNA using the four ribonucleoside triphosphates as substrates. In Syntrophotalea carbinolica (strain DSM 2380 / NBRC 103641 / GraBd1) (Pelobacter carbinolicus), this protein is DNA-directed RNA polymerase subunit beta.